A 534-amino-acid chain; its full sequence is Prolyl 4-hydroxylase subunit alpha-1 (534 aa).

A signal peptide spans 1–17; the sequence is MIWGVLMMGILLPQCSA. Residue N113 is glycosylated (N-linked (GlcNAc...) asparagine). The TPR repeat unit spans residues 205 to 238; sequence VSVLDYLSYAVYQQGDLDKALLLTKKLLELDPEH. Residue N259 is glycosylated (N-linked (GlcNAc...) asparagine). A Fe2OG dioxygenase domain is found at 411-519; the sequence is TAEELQVANY…KWVSNKWLHE (109 aa). Fe cation contacts are provided by H429, D431, and H500. K510 is a 2-oxoglutarate binding site.

Belongs to the P4HA family. As to quaternary structure, heterotetramer of two alpha-1 chains and two beta chains (P4HB)(the beta chain is the multi-functional PDI), where P4HB plays the role of a structural subunit; this tetramer catalyzes the formation of 4-hydroxyproline in collagen. The cofactor is Fe(2+). L-ascorbate is required as a cofactor.

It localises to the endoplasmic reticulum lumen. It catalyses the reaction L-prolyl-[collagen] + 2-oxoglutarate + O2 = trans-4-hydroxy-L-prolyl-[collagen] + succinate + CO2. Its function is as follows. Catalyzes the post-translational formation of 4-hydroxyproline in -Xaa-Pro-Gly- sequences in collagens and other proteins. The sequence is that of Prolyl 4-hydroxylase subunit alpha-1 (P4ha1) from Rattus norvegicus (Rat).